The following is a 343-amino-acid chain: MVTMTTQTDYSDISMTVLGAGSYGTSLAISLARNGAKVILWGHEEAHMNRLEADRANEEFLPGVAFPPSLIMSTDLEKSVQASRDLLVVVPSHVFGLVLGNVKPFLRDDSRICWATKGLEPETGRLLKEVAVEALGESHSLAVLSGPTFAKELASGMPTAIAVASPDKEFVKDLQEKIHCSKTFRVYANNDFTGMQLGGAVKNVIAIGAGMSDGIGFGANARTALITRGLAEMTRLGVALGAEAETFMGMAGLGDLVLTCTDNQSRNRRFGLALGQGGDVDSAQEEIGQVVEGYRNTKEVWLLANRMGVEMPIVEQIYQVLYQGKDARVAAQDLLARDKKSES.

S22, Y23, H43, and K117 together coordinate NADPH. K117, G146, and T148 together coordinate sn-glycerol 3-phosphate. A150 is a binding site for NADPH. 5 residues coordinate sn-glycerol 3-phosphate: K202, D255, S265, R266, and N267. Catalysis depends on K202, which acts as the Proton acceptor. Position 266 (R266) interacts with NADPH. The NADPH site is built by V290 and E292.

Belongs to the NAD-dependent glycerol-3-phosphate dehydrogenase family.

It is found in the cytoplasm. The catalysed reaction is sn-glycerol 3-phosphate + NAD(+) = dihydroxyacetone phosphate + NADH + H(+). It carries out the reaction sn-glycerol 3-phosphate + NADP(+) = dihydroxyacetone phosphate + NADPH + H(+). It participates in membrane lipid metabolism; glycerophospholipid metabolism. Its function is as follows. Catalyzes the reduction of the glycolytic intermediate dihydroxyacetone phosphate (DHAP) to sn-glycerol 3-phosphate (G3P), the key precursor for phospholipid synthesis. This is Glycerol-3-phosphate dehydrogenase [NAD(P)+] from Aliivibrio fischeri (strain ATCC 700601 / ES114) (Vibrio fischeri).